A 90-amino-acid polypeptide reads, in one-letter code: MPKARVTKNETAPVSSNPSANRTPVKINSAGTPMWYKVIMFAFMIVGLAWLIVNYLVGPQIPFMADLGAWNYGIGFGLMIIGLLMTMGWR.

The segment at 1–25 (MPKARVTKNETAPVSSNPSANRTPV) is disordered. Residues 9–22 (NETAPVSSNPSANR) show a composition bias toward polar residues. The next 2 helical transmembrane spans lie at 38–58 (VIMF…YLVG) and 67–87 (LGAW…LMTM).

It belongs to the CrgA family.

The protein localises to the cell membrane. Its function is as follows. Involved in cell division. In Corynebacterium glutamicum (strain R), this protein is Cell division protein CrgA.